We begin with the raw amino-acid sequence, 602 residues long: MSPPMSPMKPPKGFAPMSCCWSTETMQKWLPFLGWLPDYTWYALKMDFIAGISVGLTVIPQALAYAEVAGLPPQYGLYSAFMGCFVYFFLGTSRDVTLGPTAIMSLLVSFYTFHEPAYAVLLAFLTGCIQLGMGFLRLGLLLDFISCPVIKGFTSAAAIIIGFGQIKNLLGLQHIPRQFFLQVYYTFHNIGETRVGDAVLGLVCMVLLLVLKLMRDHVPPVHPEMPTGVRLSHGLVWTATTARNALVVSFAALVAYSFQVTGYQPFVLTGKTPEGLPDAHIPPFSVTTANGTISFTEMVQGMGAGLVVVPLMGLLESIAVAKSFASQNNYRINSNQELLALGFTNILGSLFSSYPVTGSFGRTAVNAQSGVCTPAGGLMTGALVLLSLDYLTSLFYYIPKSALAAVIIMAVVPLFDTKIVKTLWRVKRLDLLPLCVTFLLCFWEVQYGILAGTLVSVLILLHSVARPKIQVSEGPMLVLQPASGLHFPAIETLREALLSRALETSPPRSVALDCTHICSIDYTVVLGLGELLEDFHKRGATLALIGLQVPVLRVLLSADLKGVLYFCTLEEAEKYLKQEPGTQPYNGSEDSVPEHKIALLKA.

Residues 1 to 47 (MSPPMSPMKPPKGFAPMSCCWSTETMQKWLPFLGWLPDYTWYALKMD) are Extracellular-facing. A helical membrane pass occupies residues 48 to 68 (FIAGISVGLTVIPQALAYAEV). Residue A69 is a topological domain, cytoplasmic. Residues 70-90 (GLPPQYGLYSAFMGCFVYFFL) form a helical membrane-spanning segment. Residues 91-115 (GTSRDVTLGPTAIMSLLVSFYTFHE) are Extracellular-facing. A helical transmembrane segment spans residues 116 to 136 (PAYAVLLAFLTGCIQLGMGFL). Residues 137–143 (RLGLLLD) are Cytoplasmic-facing. Residues 144–164 (FISCPVIKGFTSAAAIIIGFG) form a helical membrane-spanning segment. Residues 165-193 (QIKNLLGLQHIPRQFFLQVYYTFHNIGET) lie on the Extracellular side of the membrane. The chain crosses the membrane as a helical span at residues 194–214 (RVGDAVLGLVCMVLLLVLKLM). The Cytoplasmic segment spans residues 215–246 (RDHVPPVHPEMPTGVRLSHGLVWTATTARNAL). The helical transmembrane segment at 247 to 267 (VVSFAALVAYSFQVTGYQPFV) threads the bilayer. The Extracellular portion of the chain corresponds to 268–300 (LTGKTPEGLPDAHIPPFSVTTANGTISFTEMVQ). Residues 301–321 (GMGAGLVVVPLMGLLESIAVA) traverse the membrane as a helical segment. The Cytoplasmic segment spans residues 322 to 337 (KSFASQNNYRINSNQE). A helical transmembrane segment spans residues 338 to 358 (LLALGFTNILGSLFSSYPVTG). The Extracellular portion of the chain corresponds to 359-370 (SFGRTAVNAQSG). Residues 371–391 (VCTPAGGLMTGALVLLSLDYL) form a helical membrane-spanning segment. Topologically, residues 392 to 394 (TSL) are cytoplasmic. Residues 395 to 415 (FYYIPKSALAAVIIMAVVPLF) traverse the membrane as a helical segment. The Extracellular portion of the chain corresponds to 416–438 (DTKIVKTLWRVKRLDLLPLCVTF). Residues 439–459 (LLCFWEVQYGILAGTLVSVLI) form a helical membrane-spanning segment. Topologically, residues 460-602 (LLHSVARPKI…PEHKIALLKA (143 aa)) are cytoplasmic. Positions 466–580 (RPKIQVSEGP…EAEKYLKQEP (115 aa)) constitute an STAS domain.

Belongs to the SLC26A/SulP transporter (TC 2.A.53) family.

The protein localises to the cell membrane. It is found in the lysosome membrane. The protein resides in the apical cell membrane. It localises to the basolateral cell membrane. The enzyme catalyses hydrogencarbonate(in) + chloride(out) = hydrogencarbonate(out) + chloride(in). It catalyses the reaction sulfate(in) + H(+)(in) = sulfate(out) + H(+)(out). The catalysed reaction is oxalate(in) + chloride(out) = oxalate(out) + chloride(in). Its function is as follows. Sodium-independent anion exchanger mediating bicarbonate, chloride, sulfate and oxalate transport. Exhibits sodium-independent sulfate anion transporter activity that may cooperate with SLC26A2 to mediate DIDS-sensitive sulfate uptake into high endothelial venules endothelial cells (HEVEC). In the kidney, mediates chloride-bicarbonate exchange, facilitating V-ATPase-mediated acid secretion. May function as a chloride channel, playing an important role in moderating chloride homeostasis and neuronal activity in the cerebellum. The sequence is that of Sodium-independent sulfate anion transporter from Bos taurus (Bovine).